The following is a 131-amino-acid chain: MSIFIFISLVLGLAHQHKRSSIIVRLYSKDGFQKCSLTIRAVSAYALACKLQLEHRPLRAQRLRQIRLAQKSRVFPFIFYQCPHKKKSARIHALTFTKEAELSKLSIETLRCIHLQLISCTRSPVVTNSSY.

A signal peptide spans 1–16 (MSIFIFISLVLGLAHQ). The short motif at 56 to 59 (RPLR) is the RxLR element. N-linked (GlcNAc...) asparagine glycosylation occurs at N128.

It belongs to the RxLR effector family.

The protein resides in the secreted. It localises to the host nucleus. Its function is as follows. Secreted effector that completely suppresses the host cell death induced by cell death-inducing proteins. This chain is Secreted RxLR effector protein 45, found in Plasmopara viticola (Downy mildew of grapevine).